The primary structure comprises 543 residues: Gap junction alpha-10 protein (543 aa).

The Cytoplasmic segment spans residues 1–16 (MGDWNLLGGILEEVHS). Residues 17–37 (HSTIVGKIWLTILFIFRMLVL) form a helical membrane-spanning segment. The Extracellular portion of the chain corresponds to 38–76 (RVAAEDVWDDEQSAFACNTRQPGCNNICYDDAFPISLIR). A helical membrane pass occupies residues 77–97 (FWVLQIIFVSSPSLVYMGHAL). The Cytoplasmic portion of the chain corresponds to 98 to 165 (YRLRAFEKDR…TYVLHILTRS (68 aa)). Residues 166-186 (VLEVGFMIGQYILYGFQMHPL) form a helical membrane-spanning segment. At 187 to 209 (YKCTQPPCPNAVDCFVSRPTEKT) the chain is on the extracellular side. A helical transmembrane segment spans residues 210–230 (IFMLFMHSIAAISLLLNILEI). Topologically, residues 231 to 543 (FHLGIRKIMR…HSIHSVKFNS (313 aa)) are cytoplasmic. Disordered stretches follow at residues 306–359 (PQPR…SSFG) and 379–424 (PSFA…DRSR). The span at 317–328 (NGKKDWSEKDQH) shows a compositional bias: basic and acidic residues. Over residues 344-359 (AGNQHLGQQSDHSSFG) the composition is skewed to polar residues. The segment covering 400–413 (TDLHSHCRDSEGSM) has biased composition (basic and acidic residues).

This sequence belongs to the connexin family. Alpha-type (group II) subfamily. In terms of assembly, a connexon is composed of a hexamer of connexins. In terms of tissue distribution, expressed in skeletal muscle and heart.

Its subcellular location is the cell membrane. It is found in the cell junction. The protein resides in the gap junction. Functionally, one gap junction consists of a cluster of closely packed pairs of transmembrane channels, the connexons, through which materials of low MW diffuse from one cell to a neighboring cell. Involved in tracer coupling between horizontal cells of the retina. May play a role in the regulation of horizontal cell patterning. The protein is Gap junction alpha-10 protein (GJA10) of Homo sapiens (Human).